We begin with the raw amino-acid sequence, 223 residues long: Deoxyribose-phosphate aldolase (223 aa).

The active-site Proton donor/acceptor is Asp89. The active-site Schiff-base intermediate with acetaldehyde is the Lys152. Catalysis depends on Lys181, which acts as the Proton donor/acceptor.

This sequence belongs to the DeoC/FbaB aldolase family. DeoC type 1 subfamily.

Its subcellular location is the cytoplasm. It carries out the reaction 2-deoxy-D-ribose 5-phosphate = D-glyceraldehyde 3-phosphate + acetaldehyde. It functions in the pathway carbohydrate degradation; 2-deoxy-D-ribose 1-phosphate degradation; D-glyceraldehyde 3-phosphate and acetaldehyde from 2-deoxy-alpha-D-ribose 1-phosphate: step 2/2. Functionally, catalyzes a reversible aldol reaction between acetaldehyde and D-glyceraldehyde 3-phosphate to generate 2-deoxy-D-ribose 5-phosphate. This Listeria monocytogenes serotype 4b (strain CLIP80459) protein is Deoxyribose-phosphate aldolase.